The sequence spans 144 residues: Peptide methionine sulfoxide reductase MsrB (144 aa).

The span at 1–12 (MDKQQGELRQRL) shows a compositional bias: basic and acidic residues. The interval 1-25 (MDKQQGELRQRLTPEQYAVTQEAAT) is disordered. Residues 5-128 (QGELRQRLTP…NSAALKFIPV (124 aa)) form the MsrB domain. Cysteine 117 functions as the Nucleophile in the catalytic mechanism.

The protein belongs to the MsrB Met sulfoxide reductase family.

The catalysed reaction is L-methionyl-[protein] + [thioredoxin]-disulfide + H2O = L-methionyl-(R)-S-oxide-[protein] + [thioredoxin]-dithiol. In Lactiplantibacillus plantarum (strain ATCC BAA-793 / NCIMB 8826 / WCFS1) (Lactobacillus plantarum), this protein is Peptide methionine sulfoxide reductase MsrB.